The sequence spans 349 residues: Sesquiterpene synthase MAC_05714 (349 aa).

Residues Asp-91 and Asp-96 each coordinate Mg(2+). Residues 91–96 carry the DDXXXD motif motif; that stretch reads DDLFVD. Arg-184 serves as a coordination point for substrate. Mg(2+) contacts are provided by Asn-230, Ser-234, and Glu-238.

It belongs to the terpene synthase family. The cofactor is Mg(2+).

It carries out the reaction (2E,6E)-farnesyl diphosphate + H2O = (+)-corvol ether B + diphosphate. The enzyme catalyses (2E,6E)-farnesyl diphosphate + H2O = (+)-corvol ether A + diphosphate. In terms of biological role, terpene synthase that catalyzes the conversion of (2E,6E)-farnesyl diphosphate (FPP) into sesquiterpenes which are important for fungi-environment interactions. Produces a mixture consisting of 8 sesquiterpenes including corvol ethers A and B, as well as traces of epizonarene, gamma-cadinene, delta-cadinene, alpha-cadinene, alpha-cadinol, and an unidentified sesquiterpene. Produces both corvol ether A and corvol ether B in similar concentrations. The sequence is that of Sesquiterpene synthase MAC_05714 from Metarhizium acridum (strain CQMa 102).